Here is a 149-residue protein sequence, read N- to C-terminus: Arginine repressor (149 aa).

It belongs to the ArgR family.

The protein localises to the cytoplasm. Its pathway is amino-acid biosynthesis; L-arginine biosynthesis [regulation]. In terms of biological role, regulates arginine biosynthesis genes. In Alkaliphilus metalliredigens (strain QYMF), this protein is Arginine repressor.